We begin with the raw amino-acid sequence, 215 residues long: Probable phosphoglycerate mutase GpmB (215 aa).

Residues 8–15 (RHGETQWN), 21–22 (QG), arginine 58, arginine 60, 82–85 (ELDM), 104–105 (RR), and 151–152 (GI) each bind substrate. The Tele-phosphohistidine intermediate role is filled by histidine 9. Glutamate 82 functions as the Proton donor/acceptor in the catalytic mechanism.

It belongs to the phosphoglycerate mutase family. GpmB subfamily.

The catalysed reaction is (2R)-2-phosphoglycerate = (2R)-3-phosphoglycerate. It participates in carbohydrate degradation; glycolysis; pyruvate from D-glyceraldehyde 3-phosphate: step 3/5. The sequence is that of Probable phosphoglycerate mutase GpmB from Klebsiella pneumoniae subsp. pneumoniae (strain ATCC 700721 / MGH 78578).